Reading from the N-terminus, the 298-residue chain is 2-dehydropantoate 2-reductase (298 aa).

Residues 7 to 12 (GGGSVG), Asn-98, and Ala-124 each bind NADP(+). Asn-98 is a substrate binding site. Lys-179 (proton donor) is an active-site residue. 4 residues coordinate substrate: Asn-183, Asn-187, Asn-197, and Ser-246. Glu-258 provides a ligand contact to NADP(+).

This sequence belongs to the ketopantoate reductase family.

It localises to the cytoplasm. The enzyme catalyses (R)-pantoate + NADP(+) = 2-dehydropantoate + NADPH + H(+). It participates in cofactor biosynthesis; (R)-pantothenate biosynthesis; (R)-pantoate from 3-methyl-2-oxobutanoate: step 2/2. Catalyzes the NADPH-dependent reduction of ketopantoate into pantoic acid. In Bacillus subtilis (strain 168), this protein is 2-dehydropantoate 2-reductase (panE).